The following is a 281-amino-acid chain: Translation initiation factor IF3-4, chloroplastic (281 aa).

The N-terminal 51 residues, 1-51 (MAGITSTVGFNAILAGATKTVSHPVKSKLFGLRLCVPEFSIVSLSPYHHRR), are a transit peptide targeting the chloroplast. Disordered regions lie at residues 63 to 86 (GGGG…DDSL) and 253 to 281 (KVQE…TQDI). 2 stretches are compositionally biased toward basic and acidic residues: residues 70 to 79 (PGDRRGRQKE) and 253 to 270 (KVQE…DDKV).

This sequence belongs to the IF-3 family. Monomer.

It localises to the plastid. It is found in the chloroplast. Its function is as follows. Chloroplast translation initiation factor that is essential for the coordination of leaf and chloroplast development. IF-3 binds to the 30S ribosomal subunit and shifts the equilibrium between 70S ribosomes and their 50S and 30S subunits in favor of the free subunits, thus enhancing the availability of 30S subunits on which protein synthesis initiation begins. This is Translation initiation factor IF3-4, chloroplastic from Arabidopsis thaliana (Mouse-ear cress).